Here is a 2016-residue protein sequence, read N- to C-terminus: Sodium channel protein type 5 subunit alpha (2016 aa).

Over 1 to 129 (MANFLLPRGT…IRRAAVKILV (129 aa)) the chain is Cytoplasmic. The segment at 28–56 (MAEKQARGSTTLQESREGLPEEEAPRPQL) is disordered. Ser36 is modified (phosphoserine). Phosphothreonine is present on Thr38. A compositionally biased stretch (basic and acidic residues) spans 41 to 52 (ESREGLPEEEAP). An I repeat occupies 113 to 420 (VLSPFHPIRR…VVAMAYEEQN (308 aa)). Residues 130–149 (HSLFNMLIMCTILTNCVFMA) form a helical membrane-spanning segment. The Extracellular portion of the chain corresponds to 150–157 (QHDPPPWT). Residues 158-179 (KYVEYTFTAIYTFESLVKILAR) form a helical membrane-spanning segment. Topologically, residues 180–188 (GFCLHAFTF) are cytoplasmic. Residues 189-209 (LRDPWNWLDFSVIIMAYTTEF) form a helical membrane-spanning segment. At 210 to 216 (VDLGNVS) the chain is on the extracellular side. An N-linked (GlcNAc...) asparagine glycan is attached at Asn214. A helical membrane pass occupies residues 217–236 (ALRTFRVLRALKTISVISGL). The Cytoplasmic portion of the chain corresponds to 237-249 (KTIVGALIQSVKK). A helical transmembrane segment spans residues 250–272 (LADVMVLTVFCLSVFALIGLQLF). The Extracellular segment spans residues 273–357 (MGNLRHKCVR…PDHGYTSFDS (85 aa)). A disulfide bridge connects residues Cys280 and Cys335. N-linked (GlcNAc...) asparagine glycans are attached at residues Asn283, Asn288, Asn291, Asn318, and Asn328. Positions 358–378 (FAWAFLALFRLMTQDCWERLY) form an intramembrane region, pore-forming. At 379-386 (QQTLRSAG) the chain is on the extracellular side. Residues 387–413 (KIYMIFFMLVIFLGSFYLVNLILAVVA) form a helical membrane-spanning segment. At 414–719 (MAYEEQNQAT…VKLVVMDPFT (306 aa)) the chain is on the cytoplasmic side. Residues Ser457, Ser460, Ser483, and Ser484 each carry the phosphoserine modification. A disordered region spans residues 461-591 (LEMSPLAPVN…APGHALHGKK (131 aa)). Thr486 carries the post-translational modification Phosphothreonine. Over residues 491–503 (EDRLPKSDSEDGP) the composition is skewed to basic and acidic residues. A phosphoserine mark is found at Ser497 and Ser510. Residues 509–528 (LSLTRGLSRTSMKPRSSRGS) show a composition bias toward polar residues. Residues Arg513 and Arg526 each carry the dimethylated arginine; alternate modification. Omega-N-methylarginine; alternate is present on residues Arg513 and Arg526. Phosphoserine occurs at positions 539, 571, 664, and 667. Residues 570–580 (TSAQGQPSPGT) are compositionally biased toward polar residues. Arg680 is modified (dimethylated arginine; alternate). An Omega-N-methylarginine; alternate modification is found at Arg680. Residues 699 to 969 (CCPLWMSIKQ…QLALARIQRG (271 aa)) form an II repeat. Residues 720 to 737 (DLTITMCIVLNTLFMALE) traverse the membrane as a helical segment. At 738–746 (HYNMTSEFE) the chain is on the extracellular side. The N-linked (GlcNAc...) asparagine glycan is linked to Asn740. The helical transmembrane segment at 747 to 769 (EMLQVGNLVFTGIFTAEMTFKII) threads the bilayer. The Cytoplasmic segment spans residues 770–775 (ALDPYY). The chain crosses the membrane as a helical span at residues 776–796 (YFQQGWNIFDSIIVILSLMEL). The Extracellular segment spans residues 797–806 (GLSRMSNLSV). Asn803 carries an N-linked (GlcNAc...) asparagine glycan. Residues 807-821 (LRSFRLLRVFKLAKS) form a helical membrane-spanning segment. The Cytoplasmic segment spans residues 822-838 (WPTLNTLIKIIGNSVGA). Residues 839–860 (LGNLTLVLAIIVFIFAVVGMQL) form a helical membrane-spanning segment. Residues 861–884 (FGKNYSELRDSDSGLLPRWHMMDF) lie on the Extracellular side of the membrane. The N-linked (GlcNAc...) asparagine glycan is linked to Asn864. The segment at residues 885-903 (FHAFLIIFRILCGEWIETM) is an intramembrane region (pore-forming). The Extracellular portion of the chain corresponds to 904–912 (WDCMEVSGQ). The cysteines at positions 906 and 915 are disulfide-linked. A helical transmembrane segment spans residues 913–941 (SLCLLVFLLVMVIGNLVVLNLFLALLLSS). Residues 942 to 1203 (FSADNLTAPD…LRKTCYHIVE (262 aa)) are Cytoplasmic-facing. A disordered region spans residues 1005-1141 (IATPYSPPPP…PEDSCSEGST (137 aa)). Residues 1015-1030 (ETEKVPPTRKETRFEE) are compositionally biased toward basic and acidic residues. Low complexity predominate over residues 1033–1044 (QPGQGTPGDPEP). The segment covering 1054–1071 (SDTDDQEEDEENSLGTEE) has biased composition (acidic residues). Residues 1096–1113 (SQVSATASSEAEASASQA) are compositionally biased toward low complexity. Residues 1187–1501 (PGKVWWRLRK…KKYYNAMKKL (315 aa)) form an III repeat. The helical transmembrane segment at 1204–1225 (HSWFETFIIFMILLSSGALAFE) threads the bilayer. Residues 1226-1236 (DIYLEERKTIK) are Extracellular-facing. The chain crosses the membrane as a helical span at residues 1237-1259 (VLLEYADKMFTYVFVLEMLLKWV). Over 1260–1268 (AYGFKKYFT) the chain is Cytoplasmic. Residues 1269 to 1291 (NAWCWLDFLIVDVSLVSLVANTL) form a helical membrane-spanning segment. The Extracellular portion of the chain corresponds to 1292–1297 (GFAEMG). Residues 1298-1317 (PIKSLRTLRALRPLRALSRF) form a helical membrane-spanning segment. Residues 1318-1330 (EGMRVVVNALVGA) lie on the Cytoplasmic side of the membrane. The chain crosses the membrane as a helical span at residues 1331–1355 (IPSIMNVLLVCLIFWLIFSIMGVNL). At 1356–1400 (FAGKFGRCINQTEGDLPLNYTIVNNKSQCESLNLTGELYWTKVKV) the chain is on the extracellular side. 4 N-linked (GlcNAc...) asparagine glycosylation sites follow: Asn1365, Asn1374, Asn1380, and Asn1388. The segment at residues 1401-1422 (NFDNVGAGYLALLQVATFKGWM) is an intramembrane region (pore-forming). Residues 1423–1445 (DIMYAAVDSRGYEEQPQWEYNLY) lie on the Extracellular side of the membrane. Residues 1446 to 1470 (MYIYFVIFIIFGSFFTLNLFIGVII) form a helical membrane-spanning segment. Residues 1471 to 1528 (DNFNQQKKKLGGQDIFMTEEQKKYYNAMKKLGSKKPQKPIPRPLNKYQGFIFDIVTKQ) are Cytoplasmic-facing. Phosphoserine; by PKC is present on Ser1503. An IV repeat occupies 1510 to 1807 (IPRPLNKYQG…WEKFDPEATQ (298 aa)). A helical membrane pass occupies residues 1529 to 1547 (AFDVTIMFLICLNMVTMMV). At 1548-1558 (ETDDQSPEKIN) the chain is on the extracellular side. The helical transmembrane segment at 1559-1580 (ILAKINLLFVAIFTGECIVKLA) threads the bilayer. At 1581 to 1589 (ALRHYYFTN) the chain is on the cytoplasmic side. A helical transmembrane segment spans residues 1590 to 1612 (SWNIFDFVVVILSIVGTVLSDII). Topologically, residues 1613–1619 (QKYFFSP) are extracellular. Residues 1620–1640 (TLFRVIRLARIGRILRLIRGA) form a helical membrane-spanning segment. Over 1641–1650 (KGIRTLLFAL) the chain is Cytoplasmic. A helical membrane pass occupies residues 1651–1679 (MMSLPALFNIGLLLFLVMFIYSIFGMANF). Topologically, residues 1680-1697 (AYVKWEAGIDDMFNFQTF) are extracellular. The pore-forming intramembrane region spans 1698 to 1714 (ANSMLCLFQITTSAGWD). At 1715 to 1745 (GLLSPILNTGPPYCDPTLPNSNGSRGDCGSP) the chain is on the extracellular side. The N-linked (GlcNAc...) asparagine glycan is linked to Asn1736. A helical membrane pass occupies residues 1746–1771 (AVGILFFTTYIIISFLIVVNMYIAII). The Cytoplasmic segment spans residues 1772–2016 (LENFSVATEE…SPDRDRESIV (245 aa)). The interval 1839–1901 (DLPMVSGDRI…ITTTLRRKHE (63 aa)) is interaction with FGF13. One can recognise an IQ domain in the interval 1901–1930 (EEVSAMVIQRAFRRHLLQRSLKHASFLFRQ). Residues 1959–1979 (PLGPPSSSSISSTSFPPSYDS) are compositionally biased toward low complexity. The interval 1959 to 2016 (PLGPPSSSSISSTSFPPSYDSVTRATSDNLQVRGSDYSHSEDLADFPPSPDRDRESIV) is disordered. Residues 1974–1977 (PPSY) form an interaction with NEDD4, NEDD4L and WWP2 region. Residues 1981 to 1990 (TRATSDNLQV) show a composition bias toward polar residues.

It belongs to the sodium channel (TC 1.A.1.10) family. Nav1.5/SCN5A subfamily. In terms of assembly, cannot form the same regulatory interactions with beta subunits as other Navs do. Interacts with the PDZ domain of the syntrophin SNTA1, SNTB1 and SNTB2. Interacts with NEDD4, NEDD4L, WWP2 and GPD1L. Interacts with CALM. Interacts with FGF13; the interaction is direct and FGF13 may regulate SNC5A density at membranes and function. May also interact with FGF12 and FGF14. Interacts with TMEM233. Interacts with the spider Jingzhaotoxin-I (AC P83974, AC B1P1B7, AC B1P1B8). Interacts with ANK3. Interacts with PKP2 (via N-terminus). Interacts with XIRP2; the interaction is required for normal action potential configuration in the heart. In terms of processing, ubiquitinated by NEDD4L; which promotes its endocytosis. Does not seem to be ubiquitinated by NEDD4 or WWP2. Post-translationally, phosphorylation at Ser-1503 by PKC in a highly conserved cytoplasmic loop slows inactivation of the sodium channel and reduces peak sodium currents. Regulated through phosphorylation by CaMK2D. Lacks the cysteine which covalently binds the conotoxin GVIIJ. This cysteine (position 868) is speculated in other sodium channel subunits alpha to be implied in covalent binding with the sodium channel subunit beta-2 or beta-4. In terms of processing, N-glycosylated at Asn-318, probably hinders potential interaction with regulatory subunits. Found in jejunal circular smooth muscle cells (at protein level). Expressed in human atrial and ventricular cardiac muscle but not in adult skeletal muscle, brain, myometrium, liver, or spleen. Isoform 4 is expressed in brain.

Its subcellular location is the cell membrane. It is found in the cytoplasm. The protein resides in the perinuclear region. The protein localises to the sarcolemma. It localises to the T-tubule. Its subcellular location is the cell junction. The enzyme catalyses Na(+)(in) = Na(+)(out). Its activity is regulated as follows. Channel inactivation is regulated by intracellular calcium levels. It is a tetrodotoxin-resistant voltage-gated Na(+) channel (Nav). Pore-forming subunit of Nav1.5, a voltage-gated sodium (Nav) channel that directly mediates the depolarizing phase of action potentials in excitable membranes. Navs, also called VGSCs (voltage-gated sodium channels) or VDSCs (voltage-dependent sodium channels), operate by switching between closed and open conformations depending on the voltage difference across the membrane. In the open conformation they allow Na(+) ions to selectively pass through the pore, along their electrochemical gradient. The influx of Na(+) ions provokes membrane depolarization, initiating the propagation of electrical signals throughout cells and tissues. Nav1.5 is the predominant sodium channel expressed in myocardial cells and it is responsible for the initial upstroke of the action potential in cardiac myocytes, thereby initiating the heartbeat. Required for normal electrical conduction including formation of the infranodal ventricular conduction system and normal action potential configuration, as a result of its interaction with XIRP2. This Homo sapiens (Human) protein is Sodium channel protein type 5 subunit alpha.